The primary structure comprises 544 residues: Secreted aspartic protease 9 (544 aa).

The N-terminal stretch at 1–17 (MRLNSVALLSLVATALA) is a signal peptide. The interval 31-50 (GESKDDLSPEDDSNPRFVKR) is disordered. The 415-residue stretch at 65 to 479 (YMATLKIGSN…DLDDYEVSLA (415 aa)) folds into the Peptidase A1 domain. D83 is a catalytic residue. 83-85 (DTG) lines the pepstatin A pocket. Cysteines 98 and 195 form a disulfide. 3 N-linked (GlcNAc...) asparagine glycosylation sites follow: N212, N240, and N252. D371 is a catalytic residue. Pepstatin A is bound at residue 371-375 (DTGST). The cysteines at positions 406 and 441 are disulfide-linked. N422 and N499 each carry an N-linked (GlcNAc...) asparagine glycan. The tract at residues 500 to 519 (SSGSGTTSSSGTSTSTSTRH) is disordered. S520 is lipidated: GPI-anchor amidated serine. Positions 521–544 (AGSIISKPVYGLLLSLLISCYVLV) are cleaved as a propeptide — removed in mature form. A helical transmembrane segment spans residues 524 to 544 (IISKPVYGLLLSLLISCYVLV).

This sequence belongs to the peptidase A1 family. Monomer. In terms of processing, the GPI-anchor is attached to the protein in the endoplasmic reticulum and serves to target the protein to the cell surface. There, the glucosamine-inositol phospholipid moiety is cleaved off and the GPI-modified mannoprotein is covalently attached via its lipidless GPI glycan remnant to the 1,6-beta-glucan of the outer cell wall layer.

The protein localises to the cell membrane. Its subcellular location is the secreted. It localises to the cell wall. It catalyses the reaction Preferential cleavage at the carboxyl of hydrophobic amino acids, but fails to cleave 15-Leu-|-Tyr-16, 16-Tyr-|-Leu-17 and 24-Phe-|-Phe-25 of insulin B chain. Activates trypsinogen, and degrades keratin.. Secreted aspartic peptidases (SAPs) are a group of ten acidic hydrolases considered as key virulence factors. These enzymes supply the fungus with nutrient amino acids as well as are able to degrade the selected host's proteins involved in the immune defense. Moreover, acts toward human hemoglobin though limited proteolysis to generate a variety of antimicrobial hemocidins, enabling to compete with the other microorganisms of the same physiological niche using the microbicidal peptides generated from the host protein. Functionally, plays a key role in defense against host by cleaving histatin-5 (Hst 5), a peptide from human saliva that carries out fungicidal activity. The cleavage rate decreases in an order of SAP2 &gt; SAP9 &gt; SAP3 &gt; SAP7 &gt; SAP4 &gt; SAP1 &gt; SAP8. The first cleavage occurs between residues 'Lys-17' and 'His-18' of Hst 5, giving DSHAKRHHGYKRKFHEK and HHSHRGY peptides. Simultaneously, the DSHAKRHHGYKRK peptide is also formed. Further fragmentation by SAP9 results in FHEK product. This is Secreted aspartic protease 9 from Candida albicans (strain SC5314 / ATCC MYA-2876) (Yeast).